The primary structure comprises 250 residues: 2-(R)-hydroxypropyl-CoM dehydrogenase (250 aa).

Residues 12–14 (SGN), Asp33, 60–61 (DV), and Asn87 each bind NAD(+). Arg152 is a 2-oxopropyl-coenzyme M binding site. The active-site Proton acceptor is Tyr155. An NAD(+)-binding site is contributed by 188 to 192 (IETPM). Position 195–196 (195–196 (WR)) interacts with 2-oxopropyl-coenzyme M.

It belongs to the short-chain dehydrogenases/reductases (SDR) family. As to quaternary structure, homodimer in solution. Homotetramer. Component III of the aliphatic epoxide carboxylation complex together with components I, II and IV.

The enzyme catalyses (R)-2-hydroxypropyl-coenzyme M + NAD(+) = 2-oxopropyl-coenzyme M + NADH + H(+). The protein operates within alkene metabolism; propylene degradation. Inhibited by the arginine-specific modifiers 2,3-butanedione and phenylglyoxal. 2-(2-methyl-2-hydroxypropylthio)ethanesulfonate (M-HPC), an achiral analog of both R-HPC and S-HPC, and (2S)-2-hydroxypropyl-coenzyme M (S-HPC) are competitive inhibitors. Inhibited (at 70%) by the coenzyme M analog 2-bromoethanesulfonate (BES). In terms of biological role, involved in aliphatic epoxide carboxylation. Catalyzes the reversible oxidation of (R)-2-hydroxypropyl-coenzyme M (R-HPC) to 2-oxopropyl-coenzyme M (2-KPC). The enzyme is highly specific for the R enantiomers. In vitro can also use achiral 2-propanol and short-chain (R)- and (S)-2-alkanols. This Xanthobacter autotrophicus (strain ATCC BAA-1158 / Py2) protein is 2-(R)-hydroxypropyl-CoM dehydrogenase.